A 973-amino-acid chain; its full sequence is Leucine--tRNA ligase, chloroplastic/mitochondrial (973 aa).

Residues P126–H135 carry the 'HIGH' region motif. The 'KMSKS' region signature appears at K730–S734. ATP is bound at residue K733.

The protein belongs to the class-I aminoacyl-tRNA synthetase family.

It is found in the plastid. Its subcellular location is the chloroplast. It localises to the mitochondrion. The enzyme catalyses tRNA(Leu) + L-leucine + ATP = L-leucyl-tRNA(Leu) + AMP + diphosphate. Functionally, catalyzes the specific attachment of an amino acid to its cognate tRNA in a two step reaction: the amino acid (AA) is first activated by ATP to form AA-AMP and then transferred to the acceptor end of the tRNA. In Arabidopsis thaliana (Mouse-ear cress), this protein is Leucine--tRNA ligase, chloroplastic/mitochondrial.